The chain runs to 68 residues: Beta-defensin 1 (68 aa).

The signal sequence occupies residues 1–21; the sequence is MRTSYLLLFTLCLLLSEMASG. Positions 22–32 are excised as a propeptide; that stretch reads DNFLTGLGHRS. 3 disulfide bridges follow: cysteine 37–cysteine 66, cysteine 44–cysteine 59, and cysteine 49–cysteine 67.

It belongs to the beta-defensin family. As to quaternary structure, monomer. Homodimer.

It is found in the secreted. The protein localises to the membrane. Its function is as follows. Has bactericidal activity. May act as a ligand for C-C chemokine receptor CCR6. Positively regulates the sperm motility and bactericidal activity in a CCR6-dependent manner. Binds to CCR6 and triggers Ca2+ mobilization in the sperm which is important for its motility. In Allochrocebus preussi (Preuss's monkey), this protein is Beta-defensin 1 (DEFB1).